A 268-amino-acid polypeptide reads, in one-letter code: Inositol polyphosphate multikinase (268 aa).

ATP contacts are provided by residues Lys-27, 86–88 (ENI), and Asp-99. 127 to 135 (TSGSLGFRI) lines the substrate pocket. An ATP-binding site is contributed by Asp-235.

Belongs to the inositol phosphokinase (IPK) family.

It localises to the cytoplasm. Its subcellular location is the nucleus. The catalysed reaction is 1D-myo-inositol 1,4,5-trisphosphate + 2 ATP = 1D-myo-inositol 1,3,4,5,6-pentakisphosphate + 2 ADP + 2 H(+). It carries out the reaction 1D-myo-inositol 1,4,5-trisphosphate + ATP = 1D-myo-inositol 1,4,5,6-tetrakisphosphate + ADP + H(+). The enzyme catalyses 1D-myo-inositol 1,4,5-trisphosphate + ATP = 1D-myo-inositol 1,3,4,5-tetrakisphosphate + ADP + H(+). It catalyses the reaction 1D-myo-inositol 1,4,5,6-tetrakisphosphate + ATP = 1D-myo-inositol 1,3,4,5,6-pentakisphosphate + ADP + H(+). Functionally, inositol phosphate kinase with both monophosphoinositol and diphosphoinositol polyphosphate synthase activities. Able to phosphorylate inositol 1,4,5-trisphosphate (Ins(1,4,5)P3) on both the carbon-3 and carbon-6 positions to synthesize inositol 1,3,4,5-tetrakisphosphate (Ins(1,3,4,5)P4) and inositol 1,4,5,6-tetrakisphosphate (Ins(1,4,5,6)P4), and then to subsequently phosphorylate and convert either isomer of InsP4 to inositol 1,3,4,5,6-pentakisphosphate (Ins(1,3,4,5,6)P5). Also converts (Ins(1,3,4,5,6)P5) to InsP6. Also has a role in transcription regulation. The catalytic activity is required for PHO gene repression by phosphate and for NCR gene activation in response to nitrogen availability, indicating a role for inositol pyrophosphates in these controls. Inositol polyphosphates may be involved in the regulation of chromatin remodeling of transcription. This is Inositol polyphosphate multikinase (arg82) from Schizosaccharomyces pombe (strain 972 / ATCC 24843) (Fission yeast).